The following is an 802-amino-acid chain: Cell division cycle 5-like protein (802 aa).

2 HTH myb-type domains span residues 1–56 (MPRI…WLDP) and 57–108 (SIKK…DKAA). DNA-binding regions (H-T-H motif) lie at residues 31-54 (WSRIASLLHRKSAKQCKARWYEWL) and 82-104 (WRTIAPIIGRTAAQCLEHYEFLL). The interval 108–143 (AQRDNEEETTDDPRKLKPGEIDPNPETKPARPDPID) is disordered. Positions 118-127 (DDPRKLKPGE) are enriched in basic and acidic residues. Lysine 135 participates in a covalent cross-link: Glycyl lysine isopeptide (Lys-Gly) (interchain with G-Cter in SUMO2). Positions 142 to 245 (IDMDEDELEM…DADFRKLRQQ (104 aa)) form a coiled coil. A Nuclear localization signal motif is present at residues 165–271 (KKAKRKAREK…KDKQHLKRKK (107 aa)). The tract at residues 200–206 (KKRKKKR) is required for interaction with CTNNBL1. Residue lysine 219 forms a Glycyl lysine isopeptide (Lys-Gly) (interchain with G-Cter in SUMO2) linkage. The residue at position 227 (threonine 227) is a Phosphothreonine. Basic and acidic residues predominate over residues 246 to 262 (DLDGELRSEKEGRDRKK). The segment at 246–278 (DLDGELRSEKEGRDRKKDKQHLKRKKESDLPSA) is disordered. Positions 260-606 (RKKDKQHLKR…NKKGKTVGFG (347 aa)) are interaction with PPP1R8. 2 positions are modified to phosphoserine: serine 303 and serine 358. A phosphothreonine mark is found at threonine 377, threonine 385, threonine 396, threonine 404, threonine 411, and threonine 415. Residues 409–418 (LSTPFRTPSH) show a composition bias toward polar residues. Positions 409–459 (LSTPFRTPSHGSEGLTPRSGTTPKPVINSTPGRTPLRDKLNINPEDGMADY) are disordered. Serine 417 carries the post-translational modification Phosphoserine. Phosphothreonine occurs at positions 424 and 430. Over residues 426–440 (RSGTTPKPVINSTPG) the composition is skewed to polar residues. Serine 437 is subject to Phosphoserine. 2 positions are modified to phosphothreonine: threonine 438 and threonine 442. Lysine 487 participates in a covalent cross-link: Glycyl lysine isopeptide (Lys-Gly) (interchain with G-Cter in SUMO2). An interaction with DAPK3 region spans residues 501–659 (ELEEREIDDT…GELSSEAYNQ (159 aa)). Coiled-coil stretches lie at residues 676–701 (RYTRANLASKKDRIESLEKRLEINRG) and 764–802 (PRRLECLKEDVQRQQEREKELQHRYADLLLEKETLKAKF). The interaction with PLRG1 stretch occupies residues 706–800 (EAKRAAKMEK…LLLEKETLKA (95 aa)).

This sequence belongs to the CEF1 family. In terms of assembly, homodimer. Interacts with DAPK3. Component of the precatalytic, catalytic and postcatalytic spliceosome complexes. Part of a spliceosomal 'core' complex consisting of CDC5L, PLRG1, SPF27, CCAP1, CCAP3 and CCAP6. Interacts with PLRG1, Lodestar/TTF2, and NIPP1/PPP1R8. Component of the minor spliceosome, which splices U12-type introns. Within this complex, interacts with SCNM1. Component of the PRP19-CDC5L splicing complex composed of a core complex comprising a homotetramer of PRPF19, CDC5L, PLRG1 and BCAS2, and at least three less stably associated proteins CTNNBL1, CWC15 and HSPA8. Interacts (via its C-terminus) directly in the complex with PRPF19 and BCAS2. Interacts (via its C-terminus) directly with PRGL1 (via its WD40 repeat domain); the interaction is required for mRNA splicing but not for spliceosome assembly. Also interacts with CTNNBL1. Interacts with PRPF19 (via N-terminus). Interacts with USB1. Interacts with DDX41. Phosphorylated on serine and threonine residues. Phosphorylation on Thr-411 and Thr-438 is required for CDC5L-mediated mRNA splicing. Has no effect on subcellular location nor on homodimerization. Phosphorylated in vitro by CDK2. Phosphorylation enhances interaction with PPP1R8.

It is found in the nucleus. Its subcellular location is the nucleus speckle. The protein localises to the cytoplasm. Functionally, DNA-binding protein involved in cell cycle control. May act as a transcription activator. Plays a role in pre-mRNA splicing as core component of precatalytic, catalytic and postcatalytic spliceosomal complexes. Component of the PRP19-CDC5L complex that forms an integral part of the spliceosome and is required for activating pre-mRNA splicing. The PRP19-CDC5L complex may also play a role in the response to DNA damage (DDR). As a component of the minor spliceosome, involved in the splicing of U12-type introns in pre-mRNAs. The sequence is that of Cell division cycle 5-like protein (CDC5L) from Bos taurus (Bovine).